The sequence spans 722 residues: Zinc finger BED domain-containing protein RICESLEEPER 1 (722 aa).

Residues 66–126 (RKKSLVWEHF…GSCPKIKNQE (61 aa)) form a BED-type zinc finger. Residues Cys89, Cys92, His113, and Cys119 each coordinate Zn(2+). A disordered region spans residues 572–592 (VEQGGGNNAPASENSTQATAP). The segment covering 580–592 (APASENSTQATAP) has biased composition (polar residues). Residues 617-702 (ELEQYLDESL…EALVCAKDWL (86 aa)) are HATC (Hobo-Ac-Tam3) domain.

In terms of assembly, homodimer.

It is found in the nucleus. In terms of biological role, transposase-like protein that is essential for plant growth and development. May regulate global gene expression by recruiting other cellular factors. The polypeptide is Zinc finger BED domain-containing protein RICESLEEPER 1 (Oryza sativa subsp. japonica (Rice)).